Consider the following 94-residue polypeptide: DNA-directed RNA polymerase subunit omega (94 aa).

Belongs to the RNA polymerase subunit omega family. The RNAP catalytic core consists of 2 alpha, 1 beta, 1 beta' and 1 omega subunit. When a sigma factor is associated with the core the holoenzyme is formed, which can initiate transcription.

The catalysed reaction is RNA(n) + a ribonucleoside 5'-triphosphate = RNA(n+1) + diphosphate. In terms of biological role, promotes RNA polymerase assembly. Latches the N- and C-terminal regions of the beta' subunit thereby facilitating its interaction with the beta and alpha subunits. In Frankia casuarinae (strain DSM 45818 / CECT 9043 / HFP020203 / CcI3), this protein is DNA-directed RNA polymerase subunit omega.